We begin with the raw amino-acid sequence, 285 residues long: Steroidogenic acute regulatory protein, mitochondrial (285 aa).

The N-terminal 63 residues, 1-63 (MLLATFKLCA…RQSSLLGSQL (63 aa)), are a transit peptide targeting the mitochondrion. Phosphoserine; by PKA is present on residues Ser-57 and Ser-195. In terms of domain architecture, START spans 67 to 280 (LYSDQELAYI…LRKRLESSPA (214 aa)).

In terms of assembly, may interact with TSPO.

The protein localises to the mitochondrion. The enzyme catalyses cholesterol(in) = cholesterol(out). The protein operates within steroid metabolism; cholesterol metabolism. Its function is as follows. Plays a key role in steroid hormone synthesis by enhancing the metabolism of cholesterol into pregnenolone. Mediates the transfer of cholesterol from the outer mitochondrial membrane to the inner mitochondrial membrane where it is cleaved to pregnenolone. In Equus caballus (Horse), this protein is Steroidogenic acute regulatory protein, mitochondrial (STAR).